Here is a 228-residue protein sequence, read N- to C-terminus: 2-C-methyl-D-erythritol 4-phosphate cytidylyltransferase (228 aa).

The protein belongs to the IspD/TarI cytidylyltransferase family. IspD subfamily.

The enzyme catalyses 2-C-methyl-D-erythritol 4-phosphate + CTP + H(+) = 4-CDP-2-C-methyl-D-erythritol + diphosphate. It functions in the pathway isoprenoid biosynthesis; isopentenyl diphosphate biosynthesis via DXP pathway; isopentenyl diphosphate from 1-deoxy-D-xylulose 5-phosphate: step 2/6. Its function is as follows. Catalyzes the formation of 4-diphosphocytidyl-2-C-methyl-D-erythritol from CTP and 2-C-methyl-D-erythritol 4-phosphate (MEP). The chain is 2-C-methyl-D-erythritol 4-phosphate cytidylyltransferase from Geobacillus thermodenitrificans (strain NG80-2).